The sequence spans 200 residues: Recombination protein RecR (200 aa).

The C4-type zinc finger occupies 57–72; the sequence is CSECRTFTEEDTCAIC. In terms of domain architecture, Toprim spans 81 to 176; sequence GEMCIVESPA…PASRIAHGVP (96 aa).

It belongs to the RecR family.

Functionally, may play a role in DNA repair. It seems to be involved in an RecBC-independent recombinational process of DNA repair. It may act with RecF and RecO. The protein is Recombination protein RecR of Aliivibrio fischeri (strain ATCC 700601 / ES114) (Vibrio fischeri).